The following is a 304-amino-acid chain: Protease HtpX homolog (304 aa).

The next 2 helical transmembrane spans lie at 14 to 34 and 39 to 59; these read VFIVIGFFIFVLMVGAAIGII and YLNGLILAAVIGAFYILIMVM. H144 lines the Zn(2+) pocket. The active site involves E145. Residue H148 participates in Zn(2+) binding. Helical transmembrane passes span 161-181 and 202-222; these read IALVAVIAILSDLAMRMIFWG and LIIYIVALVFVVLAPIIATAI. Residue E231 coordinates Zn(2+). A disordered region spans residues 276-295; it reads SPLKSKKDKPGIFDSHPPIS.

Belongs to the peptidase M48B family. Zn(2+) is required as a cofactor.

Its subcellular location is the cell membrane. The chain is Protease HtpX homolog from Listeria welshimeri serovar 6b (strain ATCC 35897 / DSM 20650 / CCUG 15529 / CIP 8149 / NCTC 11857 / SLCC 5334 / V8).